The following is a 490-amino-acid chain: Glutamyl-tRNA(Gln) amidotransferase subunit A (490 aa).

Residues lysine 81 and serine 156 each act as charge relay system in the active site. Serine 180 serves as the catalytic Acyl-ester intermediate.

This sequence belongs to the amidase family. GatA subfamily. As to quaternary structure, heterotrimer of A, B and C subunits.

It catalyses the reaction L-glutamyl-tRNA(Gln) + L-glutamine + ATP + H2O = L-glutaminyl-tRNA(Gln) + L-glutamate + ADP + phosphate + H(+). Functionally, allows the formation of correctly charged Gln-tRNA(Gln) through the transamidation of misacylated Glu-tRNA(Gln) in organisms which lack glutaminyl-tRNA synthetase. The reaction takes place in the presence of glutamine and ATP through an activated gamma-phospho-Glu-tRNA(Gln). In Nocardia farcinica (strain IFM 10152), this protein is Glutamyl-tRNA(Gln) amidotransferase subunit A.